The following is a 341-amino-acid chain: Hyaluronan and proteoglycan link protein 2 (341 aa).

The N-terminal stretch at 1-27 (MPSRIPLPAFCCFLLPWAFTSFHKALG) is a signal peptide. The region spanning 35–143 (PHYLLPPIHE…GIEDESVALT (109 aa)) is the Ig-like V-type domain. Disulfide bonds link Cys58–Cys129, Cys171–Cys241, Cys195–Cys216, Cys266–Cys337, and Cys291–Cys312. 2 consecutive Link domains span residues 149 to 243 (VVFP…FCFT) and 246 to 339 (LAGQ…YCYA).

Belongs to the HAPLN family. In terms of tissue distribution, brain. Predominantly expressed by neurons. Colocalizes with versican V2 in developing and adult cerebellar white matter and at the nodes of Ranvier.

It localises to the secreted. The protein localises to the extracellular space. It is found in the extracellular matrix. In terms of biological role, mediates a firm binding of versican V2 to hyaluronic acid. May play a pivotal role in the formation of the hyaluronan-associated matrix in the central nervous system (CNS) which facilitates neuronal conduction and general structural stabilization. Binds to hyaluronic acid. This chain is Hyaluronan and proteoglycan link protein 2 (Hapln2), found in Mus musculus (Mouse).